A 289-amino-acid chain; its full sequence is Oxaloacetate decarboxylase (289 aa).

Residue Ser50 participates in substrate binding. Mg(2+) is bound at residue Asp88. Residues Arg159 and His235 each coordinate substrate.

This sequence belongs to the isocitrate lyase/PEP mutase superfamily. Oxaloacetate decarboxylase family. Homotetramer; dimer of dimers. It depends on Mg(2+) as a cofactor.

It catalyses the reaction oxaloacetate + H(+) = pyruvate + CO2. Its function is as follows. Catalyzes the decarboxylation of oxaloacetate into pyruvate. Seems to play a role in maintaining cellular concentrations of bicarbonate and pyruvate. The protein is Oxaloacetate decarboxylase of Pseudomonas putida (strain GB-1).